The following is a 377-amino-acid chain: Naringenin,2-oxoglutarate 3-dioxygenase (377 aa).

The 105-residue stretch at 193-297 (CVDMDQKVVV…RLSIATFQNP (105 aa)) folds into the Fe2OG dioxygenase domain. Fe cation contacts are provided by His220, Asp222, and His278. Arg288 is a 2-oxoglutarate binding site.

This sequence belongs to the iron/ascorbate-dependent oxidoreductase family. The cofactor is Fe(2+). L-ascorbate serves as cofactor.

It catalyses the reaction a (2S)-flavan-4-one + 2-oxoglutarate + O2 = a (2R,3R)-dihydroflavonol + succinate + CO2. It participates in secondary metabolite biosynthesis; flavonoid biosynthesis. Its function is as follows. Catalyzes the 3-beta-hydroxylation of 2S-flavanones to 2R,3R-dihydroflavonols which are intermediates in the biosynthesis of flavonols, anthocyanidins, catechins and proanthocyanidins in plants. In Hordeum vulgare (Barley), this protein is Naringenin,2-oxoglutarate 3-dioxygenase.